A 405-amino-acid polypeptide reads, in one-letter code: Solute carrier family 35 member E2A (405 aa).

Positions 1–22 are disordered; it reads MSAAAKSQVPEEAAPGCEEEPK. 10 helical membrane-spanning segments follow: residues 76–96, 106–126, 142–162, 167–187, 195–215, 219–241, 264–284, 296–316, 326–346, and 347–367; these read LIYLTLWFFFSFCTLFLNKYI, MLGAVQMLSTTLIGCVKIFVP, FIMTMLFVGLMRFATVVLGLV, VAVSFAETVKSSAPIFTVIMS, TGLLVNLSLIPVMGGLALCTA, SFNILGFSAALSTNIMDCLQNVF, AAAVALLIPAWTFFMDIPVIG, IVLLLLTDGALFHLQSVTAYA, FSVASTVKHALSIWLSIIVFG, and NKITSLSAIGTILVTLGVLLY. The tract at residues 380–405 is disordered; that stretch reads SLVTATSRNPEDDTEPLVPQDSRQHH.

This sequence belongs to the TPT transporter family. SLC35E subfamily.

Its subcellular location is the membrane. Functionally, putative transporter. This is Solute carrier family 35 member E2A (Slc35e2a) from Mus musculus (Mouse).